We begin with the raw amino-acid sequence, 240 residues long: Tetrahydromethanopterin S-methyltransferase subunit A (240 aa).

The Cytoplasmic portion of the chain corresponds to 1–218; that stretch reads MAEKREPAAG…KFHAGVHAGK (218 aa). His-85 is a binding site for 5-hydroxybenzimidazolylcob(I)amide. Residues 219–239 traverse the membrane as a helical segment; sequence FEGIMIGLAITLSLLGLILFG. Arg-240 is a topological domain (extracellular).

Belongs to the MtrA family. In terms of assembly, the complex is composed of 8 subunits; MtrA, MtrB, MtrC, MtrD, MtrE, MtrF, MtrG and MtrH. 5-hydroxybenzimidazolylcob(I)amide serves as cofactor.

The protein resides in the cell membrane. The enzyme catalyses 5-methyl-5,6,7,8-tetrahydromethanopterin + coenzyme M + 2 Na(+)(in) = 5,6,7,8-tetrahydromethanopterin + methyl-coenzyme M + 2 Na(+)(out). It functions in the pathway one-carbon metabolism; methanogenesis from CO(2); methyl-coenzyme M from 5,10-methylene-5,6,7,8-tetrahydromethanopterin: step 2/2. Functionally, part of a complex that catalyzes the formation of methyl-coenzyme M and tetrahydromethanopterin from coenzyme M and methyl-tetrahydromethanopterin. This is an energy-conserving, sodium-ion translocating step. This Methanohalophilus mahii (strain ATCC 35705 / DSM 5219 / SLP) protein is Tetrahydromethanopterin S-methyltransferase subunit A.